A 396-amino-acid chain; its full sequence is Glutamyl-tRNA reductase (396 aa).

Residues 45-48 (TCNR), serine 101, 106-108 (EDQ), and glutamine 112 contribute to the substrate site. Cysteine 46 acts as the Nucleophile in catalysis. Residue 177–182 (GFGDVG) participates in NADP(+) binding.

The protein belongs to the glutamyl-tRNA reductase family. In terms of assembly, homodimer.

It catalyses the reaction (S)-4-amino-5-oxopentanoate + tRNA(Glu) + NADP(+) = L-glutamyl-tRNA(Glu) + NADPH + H(+). It participates in porphyrin-containing compound metabolism; protoporphyrin-IX biosynthesis; 5-aminolevulinate from L-glutamyl-tRNA(Glu): step 1/2. Catalyzes the NADPH-dependent reduction of glutamyl-tRNA(Glu) to glutamate 1-semialdehyde (GSA). The chain is Glutamyl-tRNA reductase from Clostridium acetobutylicum (strain ATCC 824 / DSM 792 / JCM 1419 / IAM 19013 / LMG 5710 / NBRC 13948 / NRRL B-527 / VKM B-1787 / 2291 / W).